The primary structure comprises 246 residues: Bis(5'-nucleosyl)-tetraphosphatase PrpE [asymmetrical] (246 aa).

The protein belongs to the PrpE family. Ni(2+) serves as cofactor.

It carries out the reaction P(1),P(4)-bis(5'-guanosyl) tetraphosphate + H2O = GMP + GTP + 2 H(+). Asymmetrically hydrolyzes Ap4p to yield AMP and ATP. The sequence is that of Bis(5'-nucleosyl)-tetraphosphatase PrpE [asymmetrical] from Bacillus thuringiensis subsp. konkukian (strain 97-27).